Reading from the N-terminus, the 79-residue chain is Small ribosomal subunit protein bS18 (79 aa).

The protein belongs to the bacterial ribosomal protein bS18 family. In terms of assembly, part of the 30S ribosomal subunit. Forms a tight heterodimer with protein bS6.

Functionally, binds as a heterodimer with protein bS6 to the central domain of the 16S rRNA, where it helps stabilize the platform of the 30S subunit. This is Small ribosomal subunit protein bS18 from Blochmanniella pennsylvanica (strain BPEN).